The chain runs to 151 residues: Large ribosomal subunit protein uL13 (151 aa).

The protein belongs to the universal ribosomal protein uL13 family. Part of the 50S ribosomal subunit.

Functionally, this protein is one of the early assembly proteins of the 50S ribosomal subunit, although it is not seen to bind rRNA by itself. It is important during the early stages of 50S assembly. The sequence is that of Large ribosomal subunit protein uL13 from Synechocystis sp. (strain ATCC 27184 / PCC 6803 / Kazusa).